Here is a 973-residue protein sequence, read N- to C-terminus: MADHKFLSIRGAREHNLKNVDLDLPRDSLIVMTGLSGSGKSSLAFDTIYAEGQRRYVESLSAYARQFLEMMQKPDVDQIDGLSPAISIEQKTTSKNPRSTVGTVTEIYDYMRLLFARVGVPYSPATGLPIESQTVSQMVDRVLALEEGTRLFLLAPIVRGRKGEYRKELLELQKKGFQRVKVDGVFYEIADVPALDKKYKHDIDVVVDRIVVRGDLATRLADSIETALKLAEGLAVAEFADKPLDSSQTGEDSVNKSKNETHERILFSEKFACPVSGFTIPEIEPRLFSFNNPFGACPTCDGLGSQRAIDPNLVVPDENVSLRDGAVSPWAKSTSPYYVQTLEALGKAYNFKLGDKFKDLSAEAQDAILRGTGEREVTFQYDDGLRSYKTTKTFEGVIPNLERRWKETESAWMREEIERFMSATPCPVCKGYRLKPEALAVKIGGKHIGEVTEQSIRNADKWFTDLPAQLNDKQNEIAVRVLKEIRERLRFLNDVGLDYLTLSRNSGTLSGGESQRIRLASQIGSGLTGVLYVLDEPSIGLHQRDNTRLLDTLKHLRDIGNTVIVVEHDEDAILHADYVVDMGPAAGIHGGEIIAQGTPQQVMANPNSITGKYLSGALEVATPGVRREAKKNRRLKIVGARGNNLKNVTAEIPLGTFTAVTGVSGGGKSTFLIETLFKAASRRIMGSREHPAEHDRIEGLEFLDKVIDIDQSPIGRTPRSNPATYTGAFTPIRDWFAGLPEAKARGYQPGRFSFNVKGGRCEACQGDGVIKIEMHFLPDVYVTCDVCHGKRYNRETLDVLFKGKSIADVLDMTVEEGVDFFAAVPGVRDKLDTLKQVGLGYIHIGQQATTLSGGEAQRIKLAKELSRKATGKTLYILDEPTTGLHFHDVAKLLEVLHELVDQGNTVVVIEHNLEVIKTADWVLDLGPEGGDGGGELVAQGTPEAIVREKRSYTGQFLKELLERRPGGKREAAE.

34–41 (GLSGSGKS) lines the ATP pocket. ABC transporter domains follow at residues 330–609 (WAKS…PNSI) and 629–958 (AKKN…QFLK). ATP is bound at residue 662–669 (GVSGGGKS). A C4-type zinc finger spans residues 761–787 (CEACQGDGVIKIEMHFLPDVYVTCDVC).

This sequence belongs to the ABC transporter superfamily. UvrA family. In terms of assembly, forms a heterotetramer with UvrB during the search for lesions.

It localises to the cytoplasm. In terms of biological role, the UvrABC repair system catalyzes the recognition and processing of DNA lesions. UvrA is an ATPase and a DNA-binding protein. A damage recognition complex composed of 2 UvrA and 2 UvrB subunits scans DNA for abnormalities. When the presence of a lesion has been verified by UvrB, the UvrA molecules dissociate. This Mesorhizobium japonicum (strain LMG 29417 / CECT 9101 / MAFF 303099) (Mesorhizobium loti (strain MAFF 303099)) protein is UvrABC system protein A.